The primary structure comprises 376 residues: Biotin synthase (376 aa).

The region spanning 68 to 292 (NEVQISTLLS…IAVTRICCPS (225 aa)) is the Radical SAM core domain. [4Fe-4S] cluster is bound by residues Cys-83, Cys-87, and Cys-90. 4 residues coordinate [2Fe-2S] cluster: Cys-129, Cys-160, Cys-220, and Arg-296.

It belongs to the radical SAM superfamily. Biotin synthase family. As to quaternary structure, homodimer. [4Fe-4S] cluster serves as cofactor. It depends on [2Fe-2S] cluster as a cofactor.

It catalyses the reaction (4R,5S)-dethiobiotin + (sulfur carrier)-SH + 2 reduced [2Fe-2S]-[ferredoxin] + 2 S-adenosyl-L-methionine = (sulfur carrier)-H + biotin + 2 5'-deoxyadenosine + 2 L-methionine + 2 oxidized [2Fe-2S]-[ferredoxin]. It functions in the pathway cofactor biosynthesis; biotin biosynthesis; biotin from 7,8-diaminononanoate: step 2/2. Its function is as follows. Catalyzes the conversion of dethiobiotin (DTB) to biotin by the insertion of a sulfur atom into dethiobiotin via a radical-based mechanism. The sequence is that of Biotin synthase from Psychrobacter cryohalolentis (strain ATCC BAA-1226 / DSM 17306 / VKM B-2378 / K5).